Consider the following 574-residue polypeptide: Ribonuclease Y (574 aa).

Residues 1–21 form a helical membrane-spanning segment; sequence MSLLDLVLLLLVLGLGGVLLL. Residues 264-327 form the KH domain; sequence AVTVVPIPSD…EIARMALEEL (64 aa). The HD domain maps to 390-483; the sequence is VLKHSIQVAH…VAAADALSAA (94 aa).

The protein belongs to the RNase Y family.

It is found in the cell membrane. In terms of biological role, endoribonuclease that initiates mRNA decay. The polypeptide is Ribonuclease Y (Thermus thermophilus (strain ATCC BAA-163 / DSM 7039 / HB27)).